A 45-amino-acid chain; its full sequence is Photosystem II reaction center protein K (45 aa).

The propeptide occupies 1-8; sequence MELMLLFA. Residues 24 to 44 traverse the membrane as a helical segment; that stretch reads LPVIPVLFLALAFVWQASVGF.

Belongs to the PsbK family. PSII is composed of 1 copy each of membrane proteins PsbA, PsbB, PsbC, PsbD, PsbE, PsbF, PsbH, PsbI, PsbJ, PsbK, PsbL, PsbM, PsbT, PsbX, PsbY, PsbZ, Psb30/Ycf12, peripheral proteins PsbO, CyanoQ (PsbQ), PsbU, PsbV and a large number of cofactors. It forms dimeric complexes.

Its subcellular location is the cellular thylakoid membrane. Functionally, one of the components of the core complex of photosystem II (PSII). PSII is a light-driven water:plastoquinone oxidoreductase that uses light energy to abstract electrons from H(2)O, generating O(2) and a proton gradient subsequently used for ATP formation. It consists of a core antenna complex that captures photons, and an electron transfer chain that converts photonic excitation into a charge separation. This chain is Photosystem II reaction center protein K, found in Cyanothece sp. (strain PCC 7425 / ATCC 29141).